A 488-amino-acid chain; its full sequence is Glutamate--tRNA ligase (488 aa).

The 'HIGH' region signature appears at 12 to 22; that stretch reads PSPTGYMHVGN. Zn(2+) contacts are provided by Cys109, Cys111, Cys136, and His138. Residues 253–257 carry the 'KMSKS' region motif; that stretch reads KLSKR. Lys256 is an ATP binding site.

It belongs to the class-I aminoacyl-tRNA synthetase family. Glutamate--tRNA ligase type 1 subfamily. As to quaternary structure, monomer. Requires Zn(2+) as cofactor.

It is found in the cytoplasm. It carries out the reaction tRNA(Glu) + L-glutamate + ATP = L-glutamyl-tRNA(Glu) + AMP + diphosphate. Functionally, catalyzes the attachment of glutamate to tRNA(Glu) in a two-step reaction: glutamate is first activated by ATP to form Glu-AMP and then transferred to the acceptor end of tRNA(Glu). This Clostridium tetani (strain Massachusetts / E88) protein is Glutamate--tRNA ligase.